Here is a 970-residue protein sequence, read N- to C-terminus: Sodium/calcium exchanger 1 (970 aa).

The first 32 residues, 1-32, serve as a signal peptide directing secretion; that stretch reads MLRLSLPPNVSMGFRLVALVALLFSHVDHITA. At 33–71 the chain is on the extracellular side; that stretch reads DTEAETGGNETTECTGSYYCKKGVILPIWEPQDPSFGDK. N-linked (GlcNAc...) asparagine glycosylation is present at Asn-41. A helical membrane pass occupies residues 72-92; sequence IARATVYFVAMVYMFLGVSII. The Cytoplasmic segment spans residues 93-133; sequence ADRFMSSIEVITSQEKEITIKKPNGETTKTTVRIWNETVSN. Residues 134-154 traverse the membrane as a helical segment; sequence LTLMALGSSAPEILLSVIEVC. The stretch at 138-178 is one Alpha-1 repeat; sequence ALGSSAPEILLSVIEVCGHNFTAGDLGPSTIVGSAAFNMFI. The Extracellular portion of the chain corresponds to 155–167; it reads GHNFTAGDLGPST. Residue Asn-157 is glycosylated (N-linked (GlcNAc...) asparagine). A helical transmembrane segment spans residues 168 to 188; that stretch reads IVGSAAFNMFIIIALCVYVVP. Residues 189-201 are Cytoplasmic-facing; that stretch reads DGETRKIKHLRVF. A helical transmembrane segment spans residues 202 to 222; the sequence is FVTAAWSIFAYTWLYIILSVS. At 223–228 the chain is on the extracellular side; the sequence is SPGVVE. Residues 229-249 traverse the membrane as a helical segment; that stretch reads VWEGLLTFFFFPICVVFAWVA. Topologically, residues 250 to 797 are cytoplasmic; sequence DRRLLFYKYV…FVPPTEYWNG (548 aa). The segment at 251–270 is putative calmodulin-binding region; it reads RRLLFYKYVYKRYRAGKQRG. Residues Ser-282 and Ser-389 each carry the phosphoserine modification. Calx-beta domains follow at residues 393–493 and 524–624; these read VNME…VHLS and ATIT…IEIG. Glu-417, Asp-453, Asp-478, Asp-479, Ile-481, Glu-483, Glu-486, Asp-530, Asp-531, Asp-532, Glu-548, Asp-584, Asp-610, Glu-611, Glu-612, and Glu-715 together coordinate Ca(2+). The chain crosses the membrane as a helical span at residues 798–818; sequence WACFIVSILMIGLLTAFIGDL. The Extracellular portion of the chain corresponds to 819 to 821; sequence ASH. The helical transmembrane segment at 822–842 threads the bilayer; the sequence is FGCTIGLKDSVTAVVFVALGT. The Alpha-2 repeat unit spans residues 839 to 875; the sequence is ALGTSVPDTFASKVAATQDQYADASIGNVTGSNAVNV. Residues 843–871 are Cytoplasmic-facing; sequence SVPDTFASKVAATQDQYADASIGNVTGSN. The helical transmembrane segment at 872–892 threads the bilayer; the sequence is AVNVFLGIGVAWSIAAIYHAA. At 893 to 903 the chain is on the extracellular side; sequence NGEQFKVSPGT. Residues 904–924 traverse the membrane as a helical segment; that stretch reads LAFSVTLFTIFAFINVGVLLY. Topologically, residues 925–941 are cytoplasmic; sequence RRRPEIGGELGGPRTAK. The chain crosses the membrane as a helical span at residues 942 to 962; that stretch reads LLTSSLFVLLWLLYIFFSSLE. The Extracellular segment spans residues 963–970; the sequence is AYCHIKGF.

This sequence belongs to the Ca(2+):cation antiporter (CaCA) (TC 2.A.19) family. SLC8 subfamily. Detected in heart, kidney and brain (at protein level).

It localises to the cell membrane. It catalyses the reaction Ca(2+)(in) + 3 Na(+)(out) = Ca(2+)(out) + 3 Na(+)(in). With respect to regulation, activated by micromolar levels of Ca(2+). In terms of biological role, mediates the exchange of one Ca(2+) ion against three to four Na(+) ions across the cell membrane, and thereby contributes to the regulation of cytoplasmic Ca(2+) levels and Ca(2+)-dependent cellular processes. Contributes to Ca(2+) transport during excitation-contraction coupling in muscle. In a first phase, voltage-gated channels mediate the rapid increase of cytoplasmic Ca(2+) levels due to release of Ca(2+) stores from the endoplasmic reticulum. SLC8A1 mediates the export of Ca(2+) from the cell during the next phase, so that cytoplasmic Ca(2+) levels rapidly return to baseline. Required for normal embryonic heart development and the onset of heart contractions. In Mus musculus (Mouse), this protein is Sodium/calcium exchanger 1 (Slc8a1).